We begin with the raw amino-acid sequence, 116 residues long: Non-specific lipid-transfer protein (116 aa).

The N-terminal stretch at 1-25 (MASMVMNVLCVAVACMVFSASYADA) is a signal peptide. Intrachain disulfides connect cysteine 28–cysteine 75, cysteine 38–cysteine 52, cysteine 53–cysteine 98, and cysteine 73–cysteine 112.

Belongs to the plant LTP family.

Functionally, plant non-specific lipid-transfer proteins transfer phospholipids as well as galactolipids across membranes. May play a role in wax or cutin deposition in the cell walls of expanding epidermal cells and certain secretory tissues. This chain is Non-specific lipid-transfer protein, found in Gerbera hybrida (Daisy).